The following is a 430-amino-acid chain: Adenylosuccinate synthetase (430 aa).

Residues 12 to 18 and 40 to 42 contribute to the GTP site; these read GDEGKGK and GHT. D13 (proton acceptor) is an active-site residue. The Mg(2+) site is built by D13 and G40. Residues 13–16, 38–41, T130, R144, Q224, T239, and R303 each bind IMP; these read DEGK and NAGH. The Proton donor role is filled by H41. Residue 299–305 coordinates substrate; that stretch reads TVTGRKR. Residues R305, 331–333, and 413–415 each bind GTP; these read KLD and STS.

Belongs to the adenylosuccinate synthetase family. In terms of assembly, homodimer. Requires Mg(2+) as cofactor.

It is found in the cytoplasm. It catalyses the reaction IMP + L-aspartate + GTP = N(6)-(1,2-dicarboxyethyl)-AMP + GDP + phosphate + 2 H(+). It functions in the pathway purine metabolism; AMP biosynthesis via de novo pathway; AMP from IMP: step 1/2. In terms of biological role, plays an important role in the de novo pathway of purine nucleotide biosynthesis. Catalyzes the first committed step in the biosynthesis of AMP from IMP. In Cereibacter sphaeroides (strain ATCC 17025 / ATH 2.4.3) (Rhodobacter sphaeroides), this protein is Adenylosuccinate synthetase.